The chain runs to 229 residues: Enolase-phosphatase E1 (229 aa).

The protein belongs to the HAD-like hydrolase superfamily. MasA/MtnC family. Monomer. It depends on Mg(2+) as a cofactor.

It carries out the reaction 5-methylsulfanyl-2,3-dioxopentyl phosphate + H2O = 1,2-dihydroxy-5-(methylsulfanyl)pent-1-en-3-one + phosphate. It participates in amino-acid biosynthesis; L-methionine biosynthesis via salvage pathway; L-methionine from S-methyl-5-thio-alpha-D-ribose 1-phosphate: step 3/6. It functions in the pathway amino-acid biosynthesis; L-methionine biosynthesis via salvage pathway; L-methionine from S-methyl-5-thio-alpha-D-ribose 1-phosphate: step 4/6. Bifunctional enzyme that catalyzes the enolization of 2,3-diketo-5-methylthiopentyl-1-phosphate (DK-MTP-1-P) into the intermediate 2-hydroxy-3-keto-5-methylthiopentenyl-1-phosphate (HK-MTPenyl-1-P), which is then dephosphorylated to form the acireductone 1,2-dihydroxy-3-keto-5-methylthiopentene (DHK-MTPene). In Yersinia pseudotuberculosis serotype IB (strain PB1/+), this protein is Enolase-phosphatase E1.